The sequence spans 141 residues: Photosystem II protein PSBR, chloroplastic (141 aa).

A chloroplast-targeting transit peptide spans 1 to 27; it reads MATMQISAKGLAPLRPRVSSRRVVKPV. Phosphothreonine occurs at positions 34 and 37. S43 bears the Phosphoserine mark. A helical membrane pass occupies residues 114–134; it reads GLIAWAGLVLVLLAVGVNLII.

This sequence belongs to the psbR family.

It is found in the plastid. It localises to the chloroplast thylakoid membrane. In terms of biological role, associated with the oxygen-evolving complex of photosystem II (PSII). Is required for the stable binding of LHCSR3 to PSII-LHCII supercomplexes and is essential for efficient energy-dependent quenching and the integrity of the PSII-LHCII-LHCSR3 supercomplex under continuous high light. The chain is Photosystem II protein PSBR, chloroplastic from Chlamydomonas reinhardtii (Chlamydomonas smithii).